We begin with the raw amino-acid sequence, 352 residues long: Zinc finger CCCH domain-containing protein 42 (352 aa).

An RRM domain is found at 36–114 (AYVYVGGIPF…RTIKVDHCGA (79 aa)). C3H1-type zinc fingers lie at residues 130–157 (REAR…HDEK) and 180–207 (REGR…HDEK). The segment at 156–179 (EKRAANTGWGHEEDRSSKWDHDKN) is disordered. Basic and acidic residues-rich tracts occupy residues 210-230 (ATTG…DKLN), 243-296 (GDFK…RSGR), and 304-352 (RHND…DRRR). The disordered stretch occupies residues 210-352 (ATTGWGHEED…DSLRREDRRR (143 aa)). Positions 319 to 348 (RAQDWEKRKAESRRDRNDREEKDRDSLRRE) form a coiled coil.

The protein is Zinc finger CCCH domain-containing protein 42 of Arabidopsis thaliana (Mouse-ear cress).